A 319-amino-acid polypeptide reads, in one-letter code: Myoblast determination protein 1 (319 aa).

A Peptide (Met-Gly) (interchain with G-Cter in ubiquitin) cross-link involves residue M1. K104 carries the N6-methyllysine; by EHMT2 modification. The bHLH domain occupies 109–160 (DRRKAATMRERRRLSKVNEAFETLKRCTSSNPNQRLPKVEILRNAIRYIEGL). Disordered stretches follow at residues 174–222 (AAAA…GARR) and 267–319 (PALL…YQVL). The span at 197-207 (SDASSPRSNCS) shows a compositional bias: polar residues. Positions 267 to 276 (PALLLADAPP) are enriched in low complexity.

In terms of assembly, efficient DNA binding requires dimerization with another bHLH protein. Seems to form active heterodimers with ITF-2. Interacts with SUV39H1. Interacts with DDX5. Interacts with CHD2. Interacts with TSC22D3. Interacts with SETD3. Interacts with P-TEFB complex; promotes the transcriptional activity of MYOD1 through its CDK9-mediated phosphorylation. Interacts with CSRP3. Interacts with NUPR1. Phosphorylated by CDK9. This phosphorylation promotes its function in muscle differentiation. Post-translationally, acetylated by a complex containing EP300 and PCAF. The acetylation is essential to activate target genes. Conversely, its deacetylation by SIRT1 inhibits its function. In terms of processing, ubiquitinated on the N-terminus; which is required for proteasomal degradation. Methylation at Lys-104 by EHMT2/G9a inhibits myogenic activity.

It localises to the nucleus. Functionally, acts as a transcriptional activator that promotes transcription of muscle-specific target genes and plays a role in muscle differentiation. Together with MYF5 and MYOG, co-occupies muscle-specific gene promoter core region during myogenesis. Induces fibroblasts to differentiate into myoblasts. Interacts with and is inhibited by the twist protein. This interaction probably involves the basic domains of both proteins. In Ovis aries (Sheep), this protein is Myoblast determination protein 1 (MYOD1).